The chain runs to 286 residues: MKNVLSIQSHVIYGHAGNSAAVFPMQRLGINVWPLNTVQLSNHMQYGHWAGSAIDAAKMEQLVDGIAAIGALKRCDAVLSGFLGSPPQARAAVEIVRSVKAMNPNAWYFCDPAMGQTGGIRPEPGVEEFMVQEMPALADGMSPNHTELQKLAGRRIETVAEAVEACRALIRRGPQIILVKHLHDRNSPADRFNMLAVTETEAWIGQRPLYAFPRHPVGVGDLTSAIFVACRLRGDSVRAAFEHTLAAVHAVVKATYDARRYELELVAAQDEIARPSEWFGAWVTDA.

Substrate contacts are provided by residues Ser-9 and 44-45 (MQ). Positions 111, 147, and 180 each coordinate ATP. Asp-221 contacts substrate.

The protein belongs to the pyridoxine kinase family. PdxY subfamily. In terms of assembly, homodimer. It depends on Mg(2+) as a cofactor.

The enzyme catalyses pyridoxal + ATP = pyridoxal 5'-phosphate + ADP + H(+). It participates in cofactor metabolism; pyridoxal 5'-phosphate salvage; pyridoxal 5'-phosphate from pyridoxal: step 1/1. Pyridoxal kinase involved in the salvage pathway of pyridoxal 5'-phosphate (PLP). Catalyzes the phosphorylation of pyridoxal to PLP. The sequence is that of Pyridoxal kinase PdxY from Burkholderia lata (strain ATCC 17760 / DSM 23089 / LMG 22485 / NCIMB 9086 / R18194 / 383).